The primary structure comprises 930 residues: Isoleucine--tRNA ligase (930 aa).

Residues 57-67 (PYANGNIHVGH) carry the 'HIGH' region motif. Glutamate 554 contacts L-isoleucyl-5'-AMP. A 'KMSKS' region motif is present at residues 595–599 (KMSKS). Lysine 598 provides a ligand contact to ATP. Zn(2+) contacts are provided by cysteine 888, cysteine 891, cysteine 908, and cysteine 911.

This sequence belongs to the class-I aminoacyl-tRNA synthetase family. IleS type 1 subfamily. Monomer. Zn(2+) serves as cofactor.

It is found in the cytoplasm. The enzyme catalyses tRNA(Ile) + L-isoleucine + ATP = L-isoleucyl-tRNA(Ile) + AMP + diphosphate. Catalyzes the attachment of isoleucine to tRNA(Ile). As IleRS can inadvertently accommodate and process structurally similar amino acids such as valine, to avoid such errors it has two additional distinct tRNA(Ile)-dependent editing activities. One activity is designated as 'pretransfer' editing and involves the hydrolysis of activated Val-AMP. The other activity is designated 'posttransfer' editing and involves deacylation of mischarged Val-tRNA(Ile). In Streptococcus pneumoniae (strain ATCC 700669 / Spain 23F-1), this protein is Isoleucine--tRNA ligase.